Here is a 1254-residue protein sequence, read N- to C-terminus: AF4/FMR2 family member 3 (1254 aa).

The span at 45–62 shows a compositional bias: basic and acidic residues; that stretch reads YEPDRNALRRKERERRSQ. Disordered regions lie at residues 45 to 90, 139 to 190, 261 to 324, 350 to 534, and 552 to 752; these read YEPD…GDEL, AESR…AAQQ, RPMD…GENN, EPSK…EGQD, and KTTC…SVGS. 2 stretches are compositionally biased toward polar residues: residues 67-76 and 143-158; these read DSGSFNSGYS and AQPQPSTVCSTASSTP. Residues 359–369 show a composition bias toward polar residues; it reads KDSQLVSSGHS. A compositionally biased stretch (low complexity) spans 406–418; it reads QQAAQRTALRALA. The span at 421–433 shows a compositional bias: polar residues; the sequence is SVVQQTNCRGSAP. The segment covering 441–472 has biased composition (low complexity); that stretch reads SSSSGGSSSSSDSESTSGSDSETESSSSSSES. A compositionally biased stretch (basic and acidic residues) spans 552–561; sequence KTTCKEEQRP. Low complexity predominate over residues 577–605; it reads SPPAAVAVTAAALPPAVPSAPTESAPAPT. The segment covering 615–633 has biased composition (basic and acidic residues); that stretch reads RRTERTSAGDGANCHRPEE. 2 stretches are compositionally biased toward low complexity: residues 694–704 and 732–749; these read TESSSSSSSSD and AASSNNNSNSNSSTSRAS. A Phosphoserine modification is found at serine 782. Residues 813–883 are disordered; it reads PGVLSAPSAK…ASTNNTLSGN (71 aa). Positions 857–869 are enriched in basic and acidic residues; the sequence is REIKKVQGRKESA. Over residues 873 to 883 the composition is skewed to polar residues; sequence AASTNNTLSGN. Phosphoserine is present on serine 908. Disordered regions lie at residues 919 to 991 and 1128 to 1171; these read ASED…HRDC and AAQA…SGLS. 2 stretches are compositionally biased toward polar residues: residues 922 to 941 and 960 to 985; these read DLTSSSRPHGNGLLTSASSN and ASHNSSENGTLHSKSRPQTEPWSPGS. Composition is skewed to low complexity over residues 1132–1146 and 1154–1171; these read PSPWGSSGKSTGSPS and PASSVGSQGSLSSSSGLS.

This sequence belongs to the AF4 family. Highest levels found in lymphoid tissues, lower levels in brain and lung.

The protein resides in the nucleus. Putative transcription activator that may function in lymphoid development and oncogenesis. The polypeptide is AF4/FMR2 family member 3 (Aff3) (Mus musculus (Mouse)).